A 608-amino-acid polypeptide reads, in one-letter code: Tyrosyl-DNA phosphodiesterase 1 (608 aa).

Residues 1–101 form a disordered region; that stretch reads MSQEGDYGRW…SDDELQPEMP (101 aa). A Phosphoserine modification is found at Ser61. Thr147 carries the post-translational modification Phosphothreonine. A Phosphoserine modification is found at Ser148. The active-site Nucleophile is the His263. Lys265 contributes to the substrate binding site. The tract at residues 400–403 is interaction with DNA; sequence SVGS. The Proton donor/acceptor role is filled by His493. Residue Lys495 participates in substrate binding.

This sequence belongs to the tyrosyl-DNA phosphodiesterase family. As to quaternary structure, monomer. Phosphorylated on serine and/or threonine residues, but not on tyrosine residues. In terms of tissue distribution, ubiquitously expressed. Similar expression throughout the central nervous system (whole brain, amygdala, caudate nucleus, cerebellum, cerebral cortex, frontal lobe, hippocampus, medulla oblongata, occipital lobe, putamen, substantia nigra, temporal lobe, thalamus, nucleus accumbens and spinal cord) and increased expression in testis and thymus.

It localises to the nucleus. Its subcellular location is the cytoplasm. In terms of biological role, DNA repair enzyme that can remove a variety of covalent adducts from DNA through hydrolysis of a 3'-phosphodiester bond, giving rise to DNA with a free 3' phosphate. Catalyzes the hydrolysis of dead-end complexes between DNA and the topoisomerase I active site tyrosine residue. Hydrolyzes 3'-phosphoglycolates on protruding 3' ends on DNA double-strand breaks due to DNA damage by radiation and free radicals. Acts on blunt-ended double-strand DNA breaks and on single-stranded DNA. Has low 3'exonuclease activity and can remove a single nucleoside from the 3'end of DNA and RNA molecules with 3'hydroxyl groups. Has no exonuclease activity towards DNA or RNA with a 3'phosphate. This chain is Tyrosyl-DNA phosphodiesterase 1 (TDP1), found in Homo sapiens (Human).